The primary structure comprises 375 residues: Transmembrane protein 183 (375 aa).

Disordered regions lie at residues 1-21 and 94-128; these read MARG…MPKR and LDSS…PDGT. The span at 95–106 shows a compositional bias: acidic residues; that stretch reads DSSDEMDAQEES. Residues 299-319 form a helical membrane-spanning segment; the sequence is LNFIFIPIVMGMIFTLFTINV.

This sequence belongs to the TMEM183 family.

Its subcellular location is the membrane. In Mus musculus (Mouse), this protein is Transmembrane protein 183 (Tmem183).